The chain runs to 387 residues: Probable NADH-dependent butanol dehydrogenase 1 (387 aa).

It belongs to the iron-containing alcohol dehydrogenase family.

Its pathway is alcohol metabolism; butanol biosynthesis. This chain is Probable NADH-dependent butanol dehydrogenase 1 (yugJ), found in Bacillus subtilis (strain 168).